Here is a 906-residue protein sequence, read N- to C-terminus: ATP-dependent DNA helicase DDX11 (906 aa).

Residues 9 to 442 (GGIHFPFPFP…KNLMYIKQIL (434 aa)) enclose the Helicase ATP-binding domain. 44-51 (SPTGTGKS) contacts ATP. Residues 78-111 (APGSGPPSSEKNSLLTSSSCQEPTDTPRPAGEPD) form a disordered region. Positions 85 to 96 (SSEKNSLLTSSS) are enriched in low complexity. The residue at position 260 (serine 260) is a Phosphoserine. [4Fe-4S] cluster contacts are provided by cysteine 265 and cysteine 283. Basic and acidic residues predominate over residues 284-301 (VDMQRSKREKNGTGEDKP). Residues 284–310 (VDMQRSKREKNGTGEDKPKRKRQKIQT) form a disordered region. Residues cysteine 312 and cysteine 347 each coordinate [4Fe-4S] cluster. The short motif at 390 to 393 (DEAH) is the DEAH box element.

This sequence belongs to the DEAD box helicase family. DEAH subfamily. DDX11/CHL1 sub-subfamily. Associates with the CTF18-RFC complex. Associates with a cohesin complex composed of RAD21, SMC1 proteins and SMC3. Interacts with CHTF18. Interacts with DSCC1. Interacts with FEN1; this interaction is direct and increases flap endonuclease activity of FEN1. Interacts with PCNA. Interacts with POLR1A and UBTF. Interacts with RAD21, SMC1 proteins and SMC3. Interacts with RFC2. Interacts with TIMELESS; this interaction increases recruitment of both proteins onto chromatin in response to replication stress induction by hydroxyurea. [4Fe-4S] cluster serves as cofactor.

It is found in the nucleus. The protein resides in the nucleolus. Its subcellular location is the cytoplasm. The protein localises to the cytoskeleton. It localises to the spindle pole. It is found in the midbody. The protein resides in the microtubule organizing center. Its subcellular location is the centrosome. It carries out the reaction Couples ATP hydrolysis with the unwinding of duplex DNA at the replication fork by translocating in the 5'-3' direction. This creates two antiparallel DNA single strands (ssDNA). The leading ssDNA polymer is the template for DNA polymerase III holoenzyme which synthesizes a continuous strand.. The enzyme catalyses ATP + H2O = ADP + phosphate + H(+). Functionally, DNA-dependent ATPase and ATP-dependent DNA helicase that participates in various functions in genomic stability, including DNA replication, DNA repair and heterochromatin organization as well as in ribosomal RNA synthesis. Its double-stranded DNA helicase activity requires either a minimal 5'-single-stranded tail length of approximately 15 nt (flap substrates) or 10 nt length single-stranded gapped DNA substrates of a partial duplex DNA structure for helicase loading and translocation along DNA in a 5' to 3' direction. The helicase activity is capable of displacing duplex regions up to 100 bp, which can be extended up to 500 bp by the replication protein A (RPA) or the cohesion CTF18-replication factor C (Ctf18-RFC) complex activities. Also shows ATPase- and helicase activities on substrates that mimic key DNA intermediates of replication, repair and homologous recombination reactions, including forked duplex, anti-parallel G-quadruplex and three-stranded D-loop DNA molecules. Plays a role in DNA double-strand break (DSB) repair at the DNA replication fork during DNA replication recovery from DNA damage. Recruited with TIMELESS factor upon DNA-replication stress response at DNA replication fork to preserve replication fork progression, and hence ensure DNA replication fidelity. Also cooperates with TIMELESS factor during DNA replication to regulate proper sister chromatid cohesion and mitotic chromosome segregation. Stimulates 5'-single-stranded DNA flap endonuclease activity of FEN1 in an ATP- and helicase-independent manner; and hence it may contribute in Okazaki fragment processing at DNA replication fork during lagging strand DNA synthesis. Its ability to function at DNA replication fork is modulated by its binding to long non-coding RNA (lncRNA) cohesion regulator non-coding RNA DDX11-AS1/CONCR, which is able to increase both DDX11 ATPase activity and binding to DNA replicating regions. Also plays a role in heterochromatin organization. Involved in rRNA transcription activation through binding to active hypomethylated rDNA gene loci by recruiting UBTF and the RNA polymerase Pol I transcriptional machinery. Plays a role in embryonic development and prevention of aneuploidy. Involved in melanoma cell proliferation and survival. Associates with chromatin at DNA replication fork regions. Binds to single- and double-stranded DNAs. In Mus musculus (Mouse), this protein is ATP-dependent DNA helicase DDX11.